Here is a 510-residue protein sequence, read N- to C-terminus: Light-independent protochlorophyllide reductase subunit B (510 aa).

Residue aspartate 36 participates in [4Fe-4S] cluster binding. Catalysis depends on aspartate 296, which acts as the Proton donor. 431 to 432 contacts substrate; that stretch reads GM.

The protein belongs to the ChlB/BchB/BchZ family. Protochlorophyllide reductase is composed of three subunits; ChlL, ChlN and ChlB. Forms a heterotetramer of two ChlB and two ChlN subunits. The cofactor is [4Fe-4S] cluster.

It carries out the reaction chlorophyllide a + oxidized 2[4Fe-4S]-[ferredoxin] + 2 ADP + 2 phosphate = protochlorophyllide a + reduced 2[4Fe-4S]-[ferredoxin] + 2 ATP + 2 H2O. The protein operates within porphyrin-containing compound metabolism; chlorophyll biosynthesis (light-independent). Its function is as follows. Component of the dark-operative protochlorophyllide reductase (DPOR) that uses Mg-ATP and reduced ferredoxin to reduce ring D of protochlorophyllide (Pchlide) to form chlorophyllide a (Chlide). This reaction is light-independent. The NB-protein (ChlN-ChlB) is the catalytic component of the complex. The polypeptide is Light-independent protochlorophyllide reductase subunit B (Synechococcus sp. (strain JA-3-3Ab) (Cyanobacteria bacterium Yellowstone A-Prime)).